The primary structure comprises 159 residues: MSITGQPHVYKKDTIIRLKPLSLNSNNRSYVFSSSKGNIQNIINHLNNLNKIVGRSLLGIWKINSYFGLSKDPSESKSKNPSVFNTAKTIFKSGGVDYSSQPKEIKSLLEAQNTRIKSLEKAIQSLDEKIEPEPLTKEEVKELKESINSIKEGLKNIIG.

This sequence belongs to the caulimoviridae ORF II family.

Functionally, this protein is involved in virus transmission. The chain is Aphid transmission protein from Arabidopsis thaliana (Mouse-ear cress).